The chain runs to 394 residues: Bone morphogenetic protein 2 (394 aa).

The signal sequence occupies residues 1–19 (MVAGTRCLLVLLLPQVLLG). Residues 20-280 (GAAGLIPELG…GHPLHKREKR (261 aa)) constitute a propeptide, cleaved by PCSK5. Ser86 carries the post-translational modification Phosphoserine. 3 N-linked (GlcNAc...) asparagine glycosylation sites follow: Asn134, Asn162, and Asn198. A disordered region spans residues 269–291 (GKGHPLHKREKRQAKHKQRKRLK). The span at 272–291 (HPLHKREKRQAKHKQRKRLK) shows a compositional bias: basic residues. 3 disulfides stabilise this stretch: Cys294/Cys359, Cys323/Cys391, and Cys327/Cys393. N-linked (GlcNAc...) asparagine glycosylation occurs at Asn336.

The protein belongs to the TGF-beta family. As to quaternary structure, homodimer; disulfide-linked. Interacts with SOSTDC1. Interacts with GREM2, RGMA, RGMB and RGMC. Interacts with ASPN. Interacts with MAFP5. Interacts with FBN1 (via N-terminal domain) and FBN2. Interacts with type I receptor BMPR1A. Interacts with type II receptor BMPR2. Interacts with SCUBE3. Interacts with TNFAIP6 (primarily via Link domain); this interaction is inhibited by hyaluronan. Interacts with ERFE. Interacts with BMPR1A/ALK3; the interaction may induce HAMP expression. Forms heterodimers with BMP6 in vitro; the heterodimer then binds to its receptor BMPR1A /ALK3 and may induce HAMP expression. Interacts with TGFBR3.

The protein resides in the secreted. In terms of biological role, growth factor of the TGF-beta superfamily that plays essential roles in many developmental processes, including cardiogenesis, neurogenesis, and osteogenesis. Induces cartilage and bone formation. Initiates the canonical BMP signaling cascade by associating with type I receptor BMPR1A and type II receptor BMPR2. Once all three components are bound together in a complex at the cell surface, BMPR2 phosphorylates and activates BMPR1A. In turn, BMPR1A propagates signal by phosphorylating SMAD1/5/8 that travel to the nucleus and act as activators and repressors of transcription of target genes. Also acts to promote expression of HAMP, via the interaction with its receptor BMPR1A/ALK3. Can also signal through non-canonical pathways such as ERK/MAP kinase signaling cascade that regulates osteoblast differentiation. Also stimulates the differentiation of myoblasts into osteoblasts via the EIF2AK3-EIF2A-ATF4 pathway by stimulating EIF2A phosphorylation which leads to increased expression of ATF4 which plays a central role in osteoblast differentiation. Acts as a positive regulator of odontoblast differentiation during mesenchymal tooth germ formation, expression is repressed during the bell stage by MSX1-mediated inhibition of CTNNB1 signaling. This Mus musculus (Mouse) protein is Bone morphogenetic protein 2 (Bmp2).